Consider the following 103-residue polypeptide: Small ribosomal subunit protein uS10 (103 aa).

The protein belongs to the universal ribosomal protein uS10 family. As to quaternary structure, part of the 30S ribosomal subunit.

Involved in the binding of tRNA to the ribosomes. The protein is Small ribosomal subunit protein uS10 of Stenotrophomonas maltophilia (strain R551-3).